A 444-amino-acid chain; its full sequence is ATP-dependent protease ATPase subunit HslU (444 aa).

ATP contacts are provided by residues isoleucine 18, 60–65, aspartate 257, glutamate 322, and arginine 394; that span reads GVGKTE.

It belongs to the ClpX chaperone family. HslU subfamily. As to quaternary structure, a double ring-shaped homohexamer of HslV is capped on each side by a ring-shaped HslU homohexamer. The assembly of the HslU/HslV complex is dependent on binding of ATP.

Its subcellular location is the cytoplasm. Its function is as follows. ATPase subunit of a proteasome-like degradation complex; this subunit has chaperone activity. The binding of ATP and its subsequent hydrolysis by HslU are essential for unfolding of protein substrates subsequently hydrolyzed by HslV. HslU recognizes the N-terminal part of its protein substrates and unfolds these before they are guided to HslV for hydrolysis. The sequence is that of ATP-dependent protease ATPase subunit HslU from Psychromonas ingrahamii (strain DSM 17664 / CCUG 51855 / 37).